A 1260-amino-acid polypeptide reads, in one-letter code: Phosphatidylinositol 3,4,5-trisphosphate 5-phosphatase 2 (1260 aa).

Positions 25-121 (WYHRDLSRAA…GLVCALLLPV (97 aa)) constitute an SH2 domain. The span at 126–136 (ELDPPDERDAS) shows a compositional bias: basic and acidic residues. A disordered region spans residues 126-178 (ELDPPDERDASDGEDEKPPLPPRSGTSVSAPLGPSSPPAAPEPPTPAVESAPN). Ser136 is modified (phosphoserine). Positions 159–171 (PSSPPAAPEPPTP) are enriched in pro residues. Phosphoserine occurs at positions 243 and 355. Tyr888 carries the post-translational modification Phosphotyrosine. Ser892 carries the phosphoserine modification. Residues 899 to 1120 (GAKSKAPSVS…FLGEAAGGDD (222 aa)) form a disordered region. A compositionally biased stretch (pro residues) spans 940 to 952 (PPPTGRPPAPPRA). The SH3-binding motif lies at 946-951 (PPAPPR). Positions 953-967 (APREEPLTPRLKPEG) are enriched in basic and acidic residues. Thr960 is modified (phosphothreonine). Residues 985–988 (NPAY) carry the NPXY motif motif. A Phosphotyrosine modification is found at Tyr988. Composition is skewed to pro residues over residues 998-1013 (LLPPEPPSPARAPVPP), 1050-1061 (LPPPDFPPPPLP), and 1090-1108 (LPPPKAHPRPPLPPGPLPP). Ser1133 carries the post-translational modification Phosphoserine. At Tyr1164 the chain carries Phosphotyrosine. Positions 1181 to 1200 (EDLAEEAPCPQAGRTGGLGE) are disordered. The SAM domain occupies 1198-1260 (LGEAGMGAWL…LLLDTLQLSK (63 aa)). Ser1259 carries the phosphoserine modification.

Belongs to the inositol 1,4,5-trisphosphate 5-phosphatase family. Interacts with tyrosine phosphorylated form of SHC1. Interacts with EGFR. Upon stimulation by the EGF signaling pathway, it forms a complex with SHC1 and EGFR. Interacts with cytoskeletal protein SORBS3/vinexin, promoting its localization to the periphery of cells. Forms a complex with filamin (FLNA or FLNB), actin, GPIb (GP1BA or GP1BB) that regulates cortical and submembraneous actin. Interacts with c-Met/MET, when c-Met/MET is phosphorylated on 'Tyr-1356'. Interacts with p130Cas/BCAR1. Interacts with CENTD3/ARAP3 via its SAM domain. Interacts with c-Cbl/CBL and CAP/SORBS1. Interacts with activated EPHA2 receptor. Interacts with receptor FCGR2A. Interacts with receptor FCGR2B. Interacts with tyrosine kinase ABL1. Interacts with tyrosine kinase TEC. Interacts with CSF1R. Interacts (via N-terminus) with SH3YL1 (via SH3 domain). Interacts with FCRL6 (tyrosine phosphorylated form). Interacts (via SH2 domain) with tyrosine phosphorylated KLRC1 (via ITIM). Interacts with NEDD9/HEF1. In terms of processing, tyrosine phosphorylated by the members of the SRC family after exposure to a diverse array of extracellular stimuli such as insulin, growth factors such as EGF or PDGF, chemokines, integrin ligands and hypertonic and oxidative stress. May be phosphorylated upon IgG receptor FCGR2B-binding. Phosphorylated at Tyr-988 following cell attachment and spreading. Phosphorylated at Tyr-1164 following EGF signaling pathway stimulation. As to expression, expressed abundantly in skeletal muscle tissue.

The protein resides in the cytoplasm. Its subcellular location is the cytosol. It localises to the cytoskeleton. It is found in the membrane. The protein localises to the cell projection. The protein resides in the filopodium. Its subcellular location is the lamellipodium. It localises to the basal cell membrane. It is found in the nucleus. The protein localises to the nucleus speckle. The protein resides in the spindle pole. The enzyme catalyses a 1,2-diacyl-sn-glycero-3-phospho-(1D-myo-inositol-3,4,5-trisphosphate) + H2O = a 1,2-diacyl-sn-glycero-3-phospho-(1D-myo-inositol-3,4-bisphosphate) + phosphate. It catalyses the reaction 1,2-dioctanoyl-sn-glycero-3-phospho-(1D-myo-inositol-3,4,5-trisphosphate) + H2O = 1,2-dioctanoyl-sn-glycero-3-phospho-(1D-myo-inositol-3,4-bisphosphate) + phosphate. It carries out the reaction 1,2-dihexadecanoyl-sn-glycero-3-phospho-(1D-myo-inositol-3,4,5-trisphosphate) + H2O = 1,2-dihexadecanoyl-sn-glycero-3-phospho-(1D-myo-inositol-3,4-bisphosphate) + phosphate. With respect to regulation, activated upon translocation to the sites of synthesis of PtdIns(3,4,5)P3 in the membrane. Enzymatic activity is enhanced in the presence of phosphatidylserine. Functionally, phosphatidylinositol (PtdIns) phosphatase that specifically hydrolyzes the 5-phosphate of phosphatidylinositol-3,4,5-trisphosphate (PtdIns(3,4,5)P3) to produce PtdIns(3,4)P2, thereby negatively regulating the PI3K (phosphoinositide 3-kinase) pathways. Required for correct mitotic spindle orientation and therefore progression of mitosis. Plays a central role in regulation of PI3K-dependent insulin signaling, although the precise molecular mechanisms and signaling pathways remain unclear. While overexpression reduces both insulin-stimulated MAP kinase and Akt activation, its absence does not affect insulin signaling or GLUT4 trafficking. Confers resistance to dietary obesity. May act by regulating AKT2, but not AKT1, phosphorylation at the plasma membrane. Part of a signaling pathway that regulates actin cytoskeleton remodeling. Required for the maintenance and dynamic remodeling of actin structures as well as in endocytosis, having a major impact on ligand-induced EGFR internalization and degradation. Participates in regulation of cortical and submembraneous actin by hydrolyzing PtdIns(3,4,5)P3 thereby regulating membrane ruffling. Regulates cell adhesion and cell spreading. Required for HGF-mediated lamellipodium formation, cell scattering and spreading. Acts as a negative regulator of EPHA2 receptor endocytosis by inhibiting via PI3K-dependent Rac1 activation. Acts as a regulator of neuritogenesis by regulating PtdIns(3,4,5)P3 level and is required to form an initial protrusive pattern, and later, maintain proper neurite outgrowth. Acts as a negative regulator of the FC-gamma-RIIA receptor (FCGR2A). Mediates signaling from the FC-gamma-RIIB receptor (FCGR2B), playing a central role in terminating signal transduction from activating immune/hematopoietic cell receptor systems. Involved in EGF signaling pathway. Upon stimulation by EGF, it is recruited by EGFR and dephosphorylates PtdIns(3,4,5)P3. Plays a negative role in regulating the PI3K-PKB pathway, possibly by inhibiting PKB activity. Down-regulates Fc-gamma-R-mediated phagocytosis in macrophages independently of INPP5D/SHIP1. In macrophages, down-regulates NF-kappa-B-dependent gene transcription by regulating macrophage colony-stimulating factor (M-CSF)-induced signaling. Plays a role in the localization of AURKA and NEDD9/HEF1 to the basolateral membrane at interphase in polarized cysts, thereby mediates cell cycle homeostasis, cell polarization and cilia assembly. Additionally promotion of cilia growth is also facilitated by hydrolysis of (PtdIns(3,4,5)P3) to PtdIns(3,4)P2. Promotes formation of apical membrane-initiation sites during the initial stages of lumen formation via Rho family-induced actin filament organization and CTNNB1 localization to cell-cell contacts. May also hydrolyze PtdIns(1,3,4,5)P4, and could thus affect the levels of the higher inositol polyphosphates like InsP6. Involved in endochondral ossification. The polypeptide is Phosphatidylinositol 3,4,5-trisphosphate 5-phosphatase 2 (Sus scrofa (Pig)).